Here is a 778-residue protein sequence, read N- to C-terminus: Preaspterpenacid I synthase sttA (778 aa).

The tract at residues 4 to 359 (ISDVMKHCVP…RYHRTDLATT (356 aa)) is sesterterpenoid synthase. Aspartate 105 lines the Mg(2+) pocket. Aspartate 105 provides a ligand contact to substrate. The segment at 211–214 (RVNE) is substrate. Asparagine 255 provides a ligand contact to substrate. Substrate stretches follow at residues 259–263 (SFPKE) and 350–351 (RY). Residues 360–774 (AEDRATLIGK…RMMLLGMGPK (415 aa)) form a geranylfarneyl diphosphate synthase region. The segment at 423–445 (AFKKSNPRNGKQNGTEGSKGTFT) is disordered. The segment covering 429 to 445 (PRNGKQNGTEGSKGTFT) has biased composition (polar residues). The isopentenyl diphosphate site is built by lysine 493, arginine 496, and histidine 525. Mg(2+) is bound by residues aspartate 532 and aspartate 536. A dimethylallyl diphosphate-binding site is contributed by arginine 541. Arginine 542 serves as a coordination point for isopentenyl diphosphate. Dimethylallyl diphosphate contacts are provided by lysine 619, threonine 620, glutamine 657, asparagine 664, and lysine 674.

This sequence in the N-terminal section; belongs to the terpene synthase family. In the C-terminal section; belongs to the FPP/GGPP synthase family.

The enzyme catalyses 4 isopentenyl diphosphate + dimethylallyl diphosphate = (2E,6E,10E,14E)-geranylfarnesyl diphosphate + 4 diphosphate. It carries out the reaction (2E,6E,10E,14E)-geranylfarnesyl diphosphate + H2O = preaspterpenacid acid I + diphosphate. The protein operates within secondary metabolite biosynthesis; terpenoid biosynthesis. In terms of biological role, sesterterpenoid synthase; part of the gene cluster that mediates the biosynthesis of aspterpenacids. Performs both prenyl transferase and terpene cyclase activity, converting isopentenyl diphosphate and dimethylallyl diphosphate into geranylfarnesyl diphosphate (GFPP) and then converting GFPP into preaspterpenacid I. C22-oxidative modification of preaspterpenacid I by the cytochrome P450 monooxygenase sttB then leads to preaspterpenacid II. It has still to be determined how preaspterpenacid II is further modified to produce aspterpenacids. This Aspergillus terreus protein is Preaspterpenacid I synthase sttA.